We begin with the raw amino-acid sequence, 161 residues long: Phosphopantetheine adenylyltransferase (161 aa).

Serine 9 is a binding site for substrate. ATP-binding positions include 9-10 and histidine 17; that span reads SF. Residues lysine 41, leucine 73, and lysine 87 each contribute to the substrate site. ATP contacts are provided by residues 88–90, glutamate 98, and 122–128; these read GLR and FSFLSSS.

The protein belongs to the bacterial CoaD family. In terms of assembly, homohexamer. It depends on Mg(2+) as a cofactor.

It localises to the cytoplasm. It carries out the reaction (R)-4'-phosphopantetheine + ATP + H(+) = 3'-dephospho-CoA + diphosphate. It participates in cofactor biosynthesis; coenzyme A biosynthesis; CoA from (R)-pantothenate: step 4/5. In terms of biological role, reversibly transfers an adenylyl group from ATP to 4'-phosphopantetheine, yielding dephospho-CoA (dPCoA) and pyrophosphate. The sequence is that of Phosphopantetheine adenylyltransferase from Nocardia farcinica (strain IFM 10152).